A 452-amino-acid chain; its full sequence is Probable phosphoglucosamine mutase (452 aa).

S101 functions as the Phosphoserine intermediate in the catalytic mechanism. The Mg(2+) site is built by S101, D242, D244, and D246. At S101 the chain carries Phosphoserine.

The protein belongs to the phosphohexose mutase family. Requires Mg(2+) as cofactor. Post-translationally, activated by phosphorylation.

The catalysed reaction is alpha-D-glucosamine 1-phosphate = D-glucosamine 6-phosphate. Functionally, catalyzes the conversion of glucosamine-6-phosphate to glucosamine-1-phosphate. This is Probable phosphoglucosamine mutase from Methanosphaera stadtmanae (strain ATCC 43021 / DSM 3091 / JCM 11832 / MCB-3).